The sequence spans 469 residues: Citrate synthase, mitochondrial (469 aa).

Residues 1-30 constitute a mitochondrion transit peptide; the sequence is MSFLTVSRLAPKLLNSKNATYFLVAARNAS. Active-site residues include histidine 304 and histidine 350. Arginine 359 is a binding site for oxaloacetate. Aspartate 405 is a catalytic residue. Oxaloacetate-binding residues include arginine 431 and arginine 451.

The protein belongs to the citrate synthase family. As to quaternary structure, homodimer.

The protein resides in the mitochondrion matrix. The catalysed reaction is oxaloacetate + acetyl-CoA + H2O = citrate + CoA + H(+). Its pathway is carbohydrate metabolism; tricarboxylic acid cycle; isocitrate from oxaloacetate: step 1/2. Functionally, key enzyme of the Krebs tricarboxylic acid cycle which catalyzes the synthesis of citrate from acetyl coenzyme A and oxaloacetate. This is Citrate synthase, mitochondrial (cs) from Xiphias gladius (Swordfish).